A 152-amino-acid polypeptide reads, in one-letter code: UPF0178 protein Bcer98_3021 (152 aa).

It belongs to the UPF0178 family.

This is UPF0178 protein Bcer98_3021 from Bacillus cytotoxicus (strain DSM 22905 / CIP 110041 / 391-98 / NVH 391-98).